The primary structure comprises 209 residues: Thymidine kinase (209 aa).

Residues 16–23 and 90–93 contribute to the ATP site; these read GPMFAGKT and DEAQ. The active-site Proton acceptor is E91.

Belongs to the thymidine kinase family. In terms of assembly, homotetramer.

The protein resides in the cytoplasm. It carries out the reaction thymidine + ATP = dTMP + ADP + H(+). This is Thymidine kinase from Onion yellows phytoplasma (strain OY-M).